Consider the following 156-residue polypeptide: ATP synthase subunit b (156 aa).

Residues 7 to 27 (IFFQMLVFFVLGWFTMKFVWP) traverse the membrane as a helical segment.

The protein belongs to the ATPase B chain family. As to quaternary structure, F-type ATPases have 2 components, F(1) - the catalytic core - and F(0) - the membrane proton channel. F(1) has five subunits: alpha(3), beta(3), gamma(1), delta(1), epsilon(1). F(0) has three main subunits: a(1), b(2) and c(10-14). The alpha and beta chains form an alternating ring which encloses part of the gamma chain. F(1) is attached to F(0) by a central stalk formed by the gamma and epsilon chains, while a peripheral stalk is formed by the delta and b chains.

It is found in the cell inner membrane. Its function is as follows. F(1)F(0) ATP synthase produces ATP from ADP in the presence of a proton or sodium gradient. F-type ATPases consist of two structural domains, F(1) containing the extramembraneous catalytic core and F(0) containing the membrane proton channel, linked together by a central stalk and a peripheral stalk. During catalysis, ATP synthesis in the catalytic domain of F(1) is coupled via a rotary mechanism of the central stalk subunits to proton translocation. Functionally, component of the F(0) channel, it forms part of the peripheral stalk, linking F(1) to F(0). The polypeptide is ATP synthase subunit b (Bordetella bronchiseptica (strain ATCC BAA-588 / NCTC 13252 / RB50) (Alcaligenes bronchisepticus)).